Reading from the N-terminus, the 78-residue chain is UPF0270 protein ECA4061 (78 aa).

Belongs to the UPF0270 family.

The polypeptide is UPF0270 protein ECA4061 (Pectobacterium atrosepticum (strain SCRI 1043 / ATCC BAA-672) (Erwinia carotovora subsp. atroseptica)).